Here is a 228-residue protein sequence, read N- to C-terminus: R-spondin-4 (228 aa).

Positions 1 to 19 (MRAPLCLLLLLAHAVDMLA) are cleaved as a signal peptide. An N-linked (GlcNAc...) asparagine glycan is attached at asparagine 34. 11 cysteine pairs are disulfide-bonded: cysteine 35/cysteine 41, cysteine 38/cysteine 47, cysteine 50/cysteine 69, cysteine 73/cysteine 88, cysteine 91/cysteine 98, cysteine 95/cysteine 104, cysteine 107/cysteine 118, cysteine 122/cysteine 135, cysteine 139/cysteine 181, cysteine 150/cysteine 157, and cysteine 190/cysteine 196. Residues 85 to 128 (ANRCKKCGATCESCFSQDFCIRCKRRFHLYKGKCLPSCPPGTLT) form an FU repeat. In terms of domain architecture, TSP type-1 spans 138–197 (ECEPSPWGSWSPCIHNGKTCGSGWGLETRVREAGPAKQEETASCRVLSESRKCPIKRLCP). The tract at residues 193-228 (KRLCPGERNPRQKNRKDRRQRKDRKLERRPHQRGSQ) is disordered. Positions 203 to 228 (RQKNRKDRRQRKDRKLERRPHQRGSQ) are enriched in basic residues.

This sequence belongs to the R-spondin family. In terms of assembly, binds heparin. Interacts with LGR4, LGR5 and LGR6.

The protein resides in the secreted. Its function is as follows. Activator of the canonical Wnt signaling pathway by acting as a ligand for LGR4-6 receptors. Upon binding to LGR4-6 (LGR4, LGR5 or LGR6), LGR4-6 associate with phosphorylated LRP6 and frizzled receptors that are activated by extracellular Wnt receptors, triggering the canonical Wnt signaling pathway to increase expression of target genes. Also regulates the canonical Wnt/beta-catenin-dependent pathway and non-canonical Wnt signaling by acting as an inhibitor of ZNRF3, an important regulator of the Wnt signaling pathway. The sequence is that of R-spondin-4 (Rspo4) from Mus musculus (Mouse).